A 227-amino-acid chain; its full sequence is Phosphoribosylformylglycinamidine synthase subunit PurQ (227 aa).

The Glutamine amidotransferase type-1 domain occupies 2–227; sequence RWAIVRFPGA…FLGLVREVAR (226 aa). The Nucleophile role is filled by cysteine 85. Residues histidine 200 and glutamate 202 contribute to the active site.

Part of the FGAM synthase complex composed of 1 PurL, 1 PurQ and 2 PurS subunits.

It is found in the cytoplasm. It carries out the reaction N(2)-formyl-N(1)-(5-phospho-beta-D-ribosyl)glycinamide + L-glutamine + ATP + H2O = 2-formamido-N(1)-(5-O-phospho-beta-D-ribosyl)acetamidine + L-glutamate + ADP + phosphate + H(+). It catalyses the reaction L-glutamine + H2O = L-glutamate + NH4(+). It functions in the pathway purine metabolism; IMP biosynthesis via de novo pathway; 5-amino-1-(5-phospho-D-ribosyl)imidazole from N(2)-formyl-N(1)-(5-phospho-D-ribosyl)glycinamide: step 1/2. Part of the phosphoribosylformylglycinamidine synthase complex involved in the purines biosynthetic pathway. Catalyzes the ATP-dependent conversion of formylglycinamide ribonucleotide (FGAR) and glutamine to yield formylglycinamidine ribonucleotide (FGAM) and glutamate. The FGAM synthase complex is composed of three subunits. PurQ produces an ammonia molecule by converting glutamine to glutamate. PurL transfers the ammonia molecule to FGAR to form FGAM in an ATP-dependent manner. PurS interacts with PurQ and PurL and is thought to assist in the transfer of the ammonia molecule from PurQ to PurL. The protein is Phosphoribosylformylglycinamidine synthase subunit PurQ of Thermus thermophilus (strain ATCC BAA-163 / DSM 7039 / HB27).